The sequence spans 447 residues: Rab GDP dissociation inhibitor alpha (447 aa).

Belongs to the Rab GDI family. As to quaternary structure, interacts with RHOH. Interacts with the non-phosphorylated forms of RAB1A, RAB3A, RAB5A, RAB5B, RAB5C, RAB8A, RAB8B, RAB10, RAB12, RAB35, and RAB43.

The protein localises to the cytoplasm. The protein resides in the golgi apparatus. Its subcellular location is the trans-Golgi network. Its function is as follows. Regulates the GDP/GTP exchange reaction of most Rab proteins by inhibiting the dissociation of GDP from them, and the subsequent binding of GTP to them. Promotes the dissociation of GDP-bound Rab proteins from the membrane and inhibits their activation. Promotes the dissociation of RAB1A, RAB3A, RAB5A and RAB10 from membranes. This is Rab GDP dissociation inhibitor alpha (GDI1) from Pongo pygmaeus (Bornean orangutan).